Consider the following 257-residue polypeptide: Acetylglutamate kinase (257 aa).

Substrate is bound by residues 43–44 (GG), arginine 65, and asparagine 157. Residues 180–185 (DISGIL) and 208–210 (IIT) each bind ATP.

This sequence belongs to the acetylglutamate kinase family. ArgB subfamily. In terms of assembly, homodimer.

The protein resides in the cytoplasm. The enzyme catalyses N-acetyl-L-glutamate + ATP = N-acetyl-L-glutamyl 5-phosphate + ADP. Its pathway is amino-acid biosynthesis; L-arginine biosynthesis; N(2)-acetyl-L-ornithine from L-glutamate: step 2/4. Its function is as follows. Catalyzes the ATP-dependent phosphorylation of N-acetyl-L-glutamate. This chain is Acetylglutamate kinase, found in Sodalis glossinidius (strain morsitans).